A 64-amino-acid polypeptide reads, in one-letter code: Large ribosomal subunit protein uL29 (64 aa).

It belongs to the universal ribosomal protein uL29 family.

This is Large ribosomal subunit protein uL29 from Levilactobacillus brevis (strain ATCC 367 / BCRC 12310 / CIP 105137 / JCM 1170 / LMG 11437 / NCIMB 947 / NCTC 947) (Lactobacillus brevis).